The sequence spans 129 residues: Large ribosomal subunit protein bL12 (129 aa).

The span at 95–123 (MVESTPKSIKEGVSKEDAEEAKKSLEDAG) shows a compositional bias: basic and acidic residues. The tract at residues 95–129 (MVESTPKSIKEGVSKEDAEEAKKSLEDAGGKASLK) is disordered.

It belongs to the bacterial ribosomal protein bL12 family. As to quaternary structure, homodimer. Part of the ribosomal stalk of the 50S ribosomal subunit. Forms a multimeric L10(L12)X complex, where L10 forms an elongated spine to which 2 to 4 L12 dimers bind in a sequential fashion. Binds GTP-bound translation factors.

In terms of biological role, forms part of the ribosomal stalk which helps the ribosome interact with GTP-bound translation factors. Is thus essential for accurate translation. This chain is Large ribosomal subunit protein bL12, found in Acaryochloris marina (strain MBIC 11017).